Reading from the N-terminus, the 128-residue chain is CD59 glycoprotein (128 aa).

Positions 1–25 (MGIQGGSVLFGLLLVLAVFCHSGNS) are cleaved as a signal peptide. The region spanning 26-108 (LQCYSCPYPT…ALKNGGTTLS (83 aa)) is the UPAR/Ly6 domain. 5 cysteine pairs are disulfide-bonded: Cys-28–Cys-51, Cys-31–Cys-38, Cys-44–Cys-64, Cys-70–Cys-88, and Cys-89–Cys-94. An N-linked (GlcNAc...) asparagine glycan is attached at Asn-43. Asn-102 carries the GPI-anchor amidated asparagine lipid modification. Residues 103–128 (GGTTLSKKTVLLLVIPFLVAAWSLHP) constitute a propeptide, removed in mature form.

As to quaternary structure, interacts with T-cell surface antigen CD2. N- and O-glycosylated.

The protein resides in the cell membrane. It is found in the secreted. Potent inhibitor of the complement membrane attack complex (MAC) action, which protects self-cells from damage during complement activation. Acts by binding to the beta-haipins of C8 (C8A and C8B) components of the assembling MAC, forming an intermolecular beta-sheet that prevents incorporation of the multiple copies of C9 required for complete formation of the osmolytic pore. This Aotus trivirgatus (Three-striped night monkey) protein is CD59 glycoprotein.